The chain runs to 537 residues: [Pyruvate dehydrogenase [acetyl-transferring]]-phosphatase 1, mitochondrial (537 aa).

The N-terminal 71 residues, 1 to 71 (MPAPTQLFFP…WWQYTQGRRY (71 aa)), are a transit peptide targeting the mitochondrion. Positions 109 to 525 (ILGFDSNQLP…DDITIIVVQF (417 aa)) constitute a PPM-type phosphatase domain. Mn(2+)-binding residues include Asp-144 and Gly-145. Lys-202 bears the N6-acetyllysine mark. Mn(2+) contacts are provided by Asp-418 and Asp-516.

It belongs to the PP2C family. In terms of assembly, heterodimer of a catalytic (PDP1) and a regulatory (PDPR) subunit. Mn(2+) is required as a cofactor. Requires Mg(2+) as cofactor.

Its subcellular location is the mitochondrion. The enzyme catalyses O-phospho-L-seryl-[pyruvate dehydrogenase E1 alpha subunit] + H2O = L-seryl-[pyruvate dehydrogenase E1 alpha subunit] + phosphate. Magnesium-dependent and calcium-stimulated. PDP1 activity strongly depends on its Ca(2+)-dependent binding to the lipoyl domain of E2 subunit of component of the pyruvate dehydrogenase complex. In terms of biological role, mitochondrial enzyme that catalyzes the dephosphorylation and concomitant reactivation of the alpha subunit of the E1 component of the pyruvate dehydrogenase complex (PDC), thereby stimulating the conversion of pyruvate into acetyl-CoA. The polypeptide is [Pyruvate dehydrogenase [acetyl-transferring]]-phosphatase 1, mitochondrial (Homo sapiens (Human)).